A 1165-amino-acid polypeptide reads, in one-letter code: Linoleate diol synthase (1165 aa).

The fatty acid alpha-dioxygenase stretch occupies residues 104 to 448 (TDGLINDLWD…DGAFDDTELV (345 aa)). A heme b-binding site is contributed by histidine 203. Residues aspartate 204, serine 219, tyrosine 221, aspartate 223, and serine 225 each coordinate Ca(2+). Residue tyrosine 376 is part of the active site. Residue histidine 379 participates in heme b binding. The tract at residues 666–1161 (EVLSNQKDYK…ATTMKINWEG (496 aa)) is epoxy alcohol synthase. Residue cysteine 1080 coordinates heme. A disordered region spans residues 1114 to 1134 (RSYPASQWPGQAGRPPRDPAW).

This sequence belongs to the peroxidase family. In terms of assembly, homotetramer. Heme b is required as a cofactor. It depends on Ca(2+) as a cofactor. Requires heme as cofactor. Post-translationally, the N-terminus is blocked.

The enzyme catalyses (9Z,12Z)-octadecadienoate + O2 = (8R,9Z,12Z)-8-hydroperoxyoctadeca-9,12-dienoate. It carries out the reaction (8R,9Z,12Z)-8-hydroperoxyoctadeca-9,12-dienoate = (7S,8S,9Z,12Z)-7,8-dihydroxyoctadeca-9,12-dienoate. 7,8-linoleate diol synthase is a bifunctional enzyme that converts linoleic acid (18:2n-6) into 8-hydroperoxy-8(E),12(Z)-octadecadienoic acid (8-HPODE) and then catalyzes the isomerization of the resulting hydroperoxide to 7,8-dihydroxy-9(Z),12(Z)-octadecadienoic acid (7,8-DiHODE). The protein is Linoleate diol synthase of Gaeumannomyces graminis (Turf grass take-all root rot fungus).